The chain runs to 251 residues: Duodenase-1 (251 aa).

The N-terminal stretch at 1 to 17 is a signal peptide; sequence MVLLLLLVALLSPTGEA. The propeptide occupies 18-19; it reads GK. The 223-residue stretch at 20–242 folds into the Peptidase S1 domain; sequence IIGGHEAKPH…SFLSWIHSTM (223 aa). C48 and C64 are joined by a disulfide. The active-site Charge relay system is the H63. N70 carries an N-linked (GlcNAc...) asparagine glycan. Residue D107 is the Charge relay system of the active site. Intrachain disulfides connect C141–C207 and C172–C186. S201 (charge relay system) is an active-site residue.

Belongs to the peptidase S1 family. Monomer.

Functionally, protease which has both trypsin-like and chymotrypsin-like activities. Shows a preferential cleavage after Lys, Arg, Tyr, Phe, and Leu residues. In Bos taurus (Bovine), this protein is Duodenase-1 (BDMD1).